We begin with the raw amino-acid sequence, 921 residues long: Isoleucine--tRNA ligase (921 aa).

The 'HIGH' region signature appears at 57-67; that stretch reads PYANGDIHMGH. Residue Glu-552 participates in L-isoleucyl-5'-AMP binding. The 'KMSKS' region signature appears at 593 to 597; sequence KMSKS. Lys-596 serves as a coordination point for ATP. 4 residues coordinate Zn(2+): Cys-888, Cys-891, Cys-908, and Cys-911.

Belongs to the class-I aminoacyl-tRNA synthetase family. IleS type 1 subfamily. In terms of assembly, monomer. Requires Zn(2+) as cofactor.

The protein resides in the cytoplasm. It carries out the reaction tRNA(Ile) + L-isoleucine + ATP = L-isoleucyl-tRNA(Ile) + AMP + diphosphate. Functionally, catalyzes the attachment of isoleucine to tRNA(Ile). As IleRS can inadvertently accommodate and process structurally similar amino acids such as valine, to avoid such errors it has two additional distinct tRNA(Ile)-dependent editing activities. One activity is designated as 'pretransfer' editing and involves the hydrolysis of activated Val-AMP. The other activity is designated 'posttransfer' editing and involves deacylation of mischarged Val-tRNA(Ile). This chain is Isoleucine--tRNA ligase, found in Bacillus anthracis (strain A0248).